Reading from the N-terminus, the 69-residue chain is ATP synthase protein 8 (69 aa).

The chain crosses the membrane as a helical span at residues 8 to 24 (TWTLTISLMIISLFCIY). N6-acetyllysine; alternate is present on K55. K55 is modified (N6-succinyllysine; alternate). An N6-acetyllysine modification is found at K58.

It belongs to the ATPase protein 8 family. In terms of assembly, F-type ATPases have 2 components, CF(1) - the catalytic core - and CF(0) - the membrane proton channel. Component of an ATP synthase complex composed of ATP5PB, ATP5MC1, ATP5F1E, ATP5PD, ATP5ME, ATP5PF, ATP5MF, MT-ATP6, MT-ATP8, ATP5F1A, ATP5F1B, ATP5F1D, ATP5F1C, ATP5PO, ATP5MG, ATP5MK and ATP5MJ. Interacts with PRICKLE3.

The protein localises to the mitochondrion membrane. Its function is as follows. Mitochondrial membrane ATP synthase (F(1)F(0) ATP synthase or Complex V) produces ATP from ADP in the presence of a proton gradient across the membrane which is generated by electron transport complexes of the respiratory chain. F-type ATPases consist of two structural domains, F(1) - containing the extramembraneous catalytic core and F(0) - containing the membrane proton channel, linked together by a central stalk and a peripheral stalk. During catalysis, ATP synthesis in the catalytic domain of F(1) is coupled via a rotary mechanism of the central stalk subunits to proton translocation. Part of the complex F(0) domain. Minor subunit located with subunit a in the membrane. This is ATP synthase protein 8 (MT-ATP8) from Didelphis virginiana (North American opossum).